The following is a 381-amino-acid chain: Phospholipid scramblase family protein C343.06c (381 aa).

A disordered region spans residues 336–369; the sequence is QEILKNDQETTPSTNDSSSETKSPFLSDADLDQQ. Residues 344–359 are compositionally biased toward polar residues; it reads ETTPSTNDSSSETKSP.

It belongs to the phospholipid scramblase family.

Its subcellular location is the mitochondrion. The polypeptide is Phospholipid scramblase family protein C343.06c (Schizosaccharomyces pombe (strain 972 / ATCC 24843) (Fission yeast)).